The sequence spans 212 residues: Protein ERP5 (212 aa).

The signal sequence occupies residues 1-20 (MKYNIVHGICLLFAITQAVG). Residues 21-178 (AVHFYAKSGE…FRNQSESANS (158 aa)) are Lumenal-facing. The GOLD domain maps to 31–124 (TKCFYEHLSR…TLRVFIELEI (94 aa)). Asparagine 171 is a glycosylation site (N-linked (GlcNAc...) asparagine). A helical membrane pass occupies residues 179–199 (KIMTWSVFQLLILLGTCAFQL). The Cytoplasmic segment spans residues 200–212 (RYLKNFFVKQKVV).

It belongs to the EMP24/GP25L family.

The protein resides in the endoplasmic reticulum membrane. In terms of biological role, involved in vesicular protein trafficking. The sequence is that of Protein ERP5 (ERP5) from Saccharomyces cerevisiae (strain ATCC 204508 / S288c) (Baker's yeast).